A 175-amino-acid polypeptide reads, in one-letter code: Austinoid biosynthesis cluster protein F (175 aa).

It belongs to the trt14 isomerase family. As to quaternary structure, homodimer.

It participates in secondary metabolite biosynthesis; terpenoid biosynthesis. Part of the gene cluster that mediates the biosynthesis of calidodehydroaustin, a fungal meroterpenoid. The first step of the pathway is the synthesis of 3,5-dimethylorsellinic acid by the polyketide synthase ausA. 3,5-dimethylorsellinic acid is then prenylated by the polyprenyl transferase ausN. Further epoxidation by the FAD-dependent monooxygenase ausM and cyclization by the probable terpene cyclase ausL lead to the formation of protoaustinoid A. Protoaustinoid A is then oxidized to spiro-lactone preaustinoid A3 by the combined action of the FAD-binding monooxygenases ausB and ausC, and the dioxygenase ausE. Acid-catalyzed keto-rearrangement and ring contraction of the tetraketide portion of preaustinoid A3 by ausJ lead to the formation of preaustinoid A4. The aldo-keto reductase ausK, with the help of ausH, is involved in the next step by transforming preaustinoid A4 into isoaustinone which is in turn hydroxylated by the P450 monooxygenase ausI to form austinolide. The cytochrome P450 monooxygenase ausG modifies austinolide to austinol. Austinol is further acetylated to austin by the O-acetyltransferase ausP, which spontaneously changes to dehydroaustin. The cytochrome P450 monooxygenase ausR then converts dehydroaustin is into 7-dehydrodehydroaustin. The hydroxylation catalyzed by ausR permits the O-acetyltransferase ausQ to add an additional acetyl group to the molecule, leading to the formation of acetoxydehydroaustin. The short chain dehydrogenase ausT catalyzes the reduction of the double bond present between carbon atoms 1 and 2 to convert 7-dehydrodehydroaustin into 1,2-dihydro-7-hydroxydehydroaustin. AusQ catalyzes not only an acetylation reaction but also the addition of the PKS ausV diketide product to 1,2-dihydro-7-hydroxydehydroaustin, forming precalidodehydroaustin. Finally, the iron/alpha-ketoglutarate-dependent dioxygenase converts precalidodehydroaustin into calidodehydroaustin. This chain is Austinoid biosynthesis cluster protein F, found in Aspergillus calidoustus.